An 80-amino-acid chain; its full sequence is CDC42 small effector protein 1 (80 aa).

S-palmitoyl cysteine attachment occurs at residues Cys10 and Cys11. The region spanning 30 to 43 (IGEPMNFVHLTHIG) is the CRIB domain. The disordered stretch occupies residues 48–80 (GAGDGLAMTGAVQEQMRSKGNHRDRPWSNSRAL).

Belongs to the CDC42SE/SPEC family. Interacts with CDC42 (in GTP-bound form). Interacts weakly with RAC1 and not at all with RHOA.

The protein localises to the cytoplasm. It is found in the cytoskeleton. Its subcellular location is the cell membrane. In terms of biological role, probably involved in the organization of the actin cytoskeleton by acting downstream of CDC42, inducing actin filament assembly. Alters CDC42-induced cell shape changes. In activated T-cells, may play a role in CDC42-mediated F-actin accumulation at the immunological synapse. May play a role in early contractile events in phagocytosis in macrophages. The sequence is that of CDC42 small effector protein 1 (Cdc42se1) from Mus musculus (Mouse).